A 473-amino-acid polypeptide reads, in one-letter code: Pentatricopeptide repeat-containing protein At3g60050 (473 aa).

PPR repeat units follow at residues Thr-148–Thr-182, Thr-183–Pro-217, Phe-218–Pro-252, Asp-253–Pro-287, Asp-288–Pro-322, Ser-323–Pro-357, Asp-358–Pro-392, Asn-393–Pro-427, and Asn-428–Val-462.

The protein belongs to the PPR family. P subfamily.

The sequence is that of Pentatricopeptide repeat-containing protein At3g60050 from Arabidopsis thaliana (Mouse-ear cress).